We begin with the raw amino-acid sequence, 174 residues long: Micrococcal nuclease (174 aa).

An N-terminal signal peptide occupies residues 1–23; the sequence is MKSALAALRAVAAAVVLIVSVPA. Active-site residues include Arg52, Glu60, and Arg94.

This sequence belongs to the thermonuclease family.

It catalyses the reaction Endonucleolytic cleavage to nucleoside 3'-phosphates and 3'-phosphooligonucleotide end-products.. The chain is Micrococcal nuclease (nuc) from Shigella flexneri.